We begin with the raw amino-acid sequence, 54 residues long: Large ribosomal subunit protein bL33 (54 aa).

It belongs to the bacterial ribosomal protein bL33 family.

The protein is Large ribosomal subunit protein bL33 of Legionella pneumophila (strain Lens).